Here is a 1246-residue protein sequence, read N- to C-terminus: Stromal processing peptidase, chloroplastic (1246 aa).

The N-terminal 136 residues, 1 to 136, are a transit peptide targeting the chloroplast; it reads MASFPSPPLA…AKIRRRHVLH (136 aa). His-228 serves as a coordination point for Zn(2+). The Proton acceptor role is filled by Glu-231. A Zn(2+)-binding site is contributed by His-232. Residue Glu-302 is part of the active site. Glu-309 lines the Zn(2+) pocket.

It belongs to the peptidase M16 family. Zn(2+) serves as cofactor.

Its subcellular location is the plastid. It is found in the chloroplast stroma. Functionally, cleaves presequences (transit peptides) from chloroplastic protein precursors. Initially recognizes a precursor by binding to the C-terminus of its transit peptide and then removes the transit peptide in a single endoproteolytic step. In a next step, pursues the cleavage of transit peptide to a subfragment form. The chain is Stromal processing peptidase, chloroplastic from Oryza sativa subsp. japonica (Rice).